A 298-amino-acid chain; its full sequence is Porphobilinogen deaminase (298 aa).

Cys242 carries the S-(dipyrrolylmethanemethyl)cysteine modification.

The protein belongs to the HMBS family. Monomer. The cofactor is dipyrromethane.

The catalysed reaction is 4 porphobilinogen + H2O = hydroxymethylbilane + 4 NH4(+). It functions in the pathway porphyrin-containing compound metabolism; protoporphyrin-IX biosynthesis; coproporphyrinogen-III from 5-aminolevulinate: step 2/4. Tetrapolymerization of the monopyrrole PBG into the hydroxymethylbilane pre-uroporphyrinogen in several discrete steps. This chain is Porphobilinogen deaminase, found in Fusobacterium nucleatum subsp. nucleatum (strain ATCC 25586 / DSM 15643 / BCRC 10681 / CIP 101130 / JCM 8532 / KCTC 2640 / LMG 13131 / VPI 4355).